The primary structure comprises 138 residues: Glutaredoxin-C7 (138 aa).

Residues S17–Q40 are disordered. The 96-residue stretch at A42–C137 folds into the Glutaredoxin domain. C62 and C65 form a disulfide bridge.

The protein belongs to the glutaredoxin family. CC-type subfamily.

The protein resides in the cytoplasm. Functionally, has a glutathione-disulfide oxidoreductase activity in the presence of NADPH and glutathione reductase. Reduces low molecular weight disulfides and proteins. The sequence is that of Glutaredoxin-C7 (GRXC7) from Oryza sativa subsp. japonica (Rice).